A 349-amino-acid polypeptide reads, in one-letter code: Interferon regulatory factor 2 (349 aa).

The segment at residues 5 to 113 (RMRMRPWLEE…NAFRVYRMLP (109 aa)) is a DNA-binding region (IRF tryptophan pentad repeat). Residues K75 and K78 each carry the N6-acetyllysine modification. K137 is covalently cross-linked (Glycyl lysine isopeptide (Lys-Gly) (interchain with G-Cter in SUMO); alternate). K137 participates in a covalent cross-link: Glycyl lysine isopeptide (Lys-Gly) (interchain with G-Cter in SUMO2); alternate. K166 is covalently cross-linked (Glycyl lysine isopeptide (Lys-Gly) (interchain with G-Cter in SUMO)). Residue S225 is modified to Phosphoserine. Positions 230–239 (YAESETTDSV) are enriched in polar residues. The interval 230–253 (YAESETTDSVASDEENAEGRPHWR) is disordered. K260 is covalently cross-linked (Glycyl lysine isopeptide (Lys-Gly) (interchain with G-Cter in SUMO2)). K293 participates in a covalent cross-link: Glycyl lysine isopeptide (Lys-Gly) (interchain with G-Cter in SUMO). The tract at residues 303 to 349 (SSWPPFTDLPLPAPVTPTPSSSRPDRETRASVIKKTSDITQARVKSC) is disordered.

Belongs to the IRF family. As to quaternary structure, interacts with BRD7, IRF2BP1 and IRF2BP2. Interacts with CREBBP in growing cells; the interaction acetylates IRF2 and regulates IRF2-dependent H4 promoter activity. Post-translationally, acetylated by CBP/ p300 during cell-growth. Acetylation on Lys-75 is required for stimulation of H4 promoter activity. In terms of processing, the major sites of sumoylation are Lys-137 and Lys-293. Sumoylation with SUMO1 increases its transcriptional repressor activity on IRF1 and diminishes its ability to activate ISRE and H4 promoter.

Its subcellular location is the nucleus. In terms of biological role, specifically binds to the upstream regulatory region of type I IFN and IFN-inducible MHC class I genes (the interferon consensus sequence (ICS)) and represses those genes. Also acts as an activator for several genes including H4 and IL7. Constitutively binds to the ISRE promoter to activate IL7. Involved in cell cycle regulation through binding the site II (HiNF-M) promoter region of H4 and activating transcription during cell growth. Antagonizes IRF1 transcriptional activation. In Mus musculus (Mouse), this protein is Interferon regulatory factor 2 (Irf2).